The chain runs to 406 residues: Probable 2,3-bisphosphoglycerate-independent phosphoglycerate mutase (406 aa).

It belongs to the BPG-independent phosphoglycerate mutase family. A-PGAM subfamily.

It catalyses the reaction (2R)-2-phosphoglycerate = (2R)-3-phosphoglycerate. Its pathway is carbohydrate degradation; glycolysis; pyruvate from D-glyceraldehyde 3-phosphate: step 3/5. Catalyzes the interconversion of 2-phosphoglycerate and 3-phosphoglycerate. In Thermus thermophilus (strain ATCC 27634 / DSM 579 / HB8), this protein is Probable 2,3-bisphosphoglycerate-independent phosphoglycerate mutase.